A 253-amino-acid polypeptide reads, in one-letter code: CD151 antigen (253 aa).

The Cytoplasmic segment spans residues 1 to 18; that stretch reads MGEFNEKKTTCGTVCLKY. 2 S-palmitoyl cysteine lipidation sites follow: Cys-11 and Cys-15. Residues 19-39 traverse the membrane as a helical segment; the sequence is LLFTYNCCFWLAGLAVMAVGI. Topologically, residues 40–57 are extracellular; sequence WTLALKSDYISLLASGTY. The chain crosses the membrane as a helical span at residues 58 to 78; it reads LATAYILVVAGTVVMVTGVLG. The Cytoplasmic portion of the chain corresponds to 79-91; that stretch reads CCATFKERRNLLR. A helical transmembrane segment spans residues 92 to 112; the sequence is LYFILLLIIFLLEIIAGILAY. Residues 113–221 lie on the Extracellular side of the membrane; sequence AYYQQLNTEL…LETFIQEHLR (109 aa). Asn-159 carries N-linked (GlcNAc...) asparagine glycosylation. The helical transmembrane segment at 222 to 242 threads the bilayer; it reads VIGAVGIGIACVQVFGMIFTC. S-palmitoyl cysteine attachment occurs at residues Cys-242 and Cys-243. Residues 243 to 253 lie on the Cytoplasmic side of the membrane; it reads CLYRSLKLEHY.

This sequence belongs to the tetraspanin (TM4SF) family. In terms of assembly, interacts with integrins ITGA3:ITGB1, ITGA5:ITGB1, ITGA3:ITGB1 and ITGA6:ITGB4 and with CD9 and CD181. Interacts (via the second extracellular domain) with integrin ITGAV:ITGB3. Interacts with ITGA3; this interaction modulates ITGA3 glycosylation pattern. Interacts with F11R. Interacts with RAC1 and CDC42; these interactions mediate physical association of RAC1 and CDC42 with integrin adhesion receptor complexes. Post-translationally, palmitoylated. Palmitoylation by ZDHHC2 regulates CD151 expression, association with other tetraspanin family proteins and function in cell adhesion. Ubiquitinated by RNF128 on lysine residues present in the tetraspanin amino terminus via 'Lys-48'-linked ubiquitin leading to proteasomal degradation. In terms of tissue distribution, expressed in a variety of tissues including vascular endothelium and epidermis. Expressed on erythroid cells, with a higher level of expression in erythroid precursors than on mature erythrocytes. Acts as a sensitive T-cell activation marker.

Its subcellular location is the cell membrane. Functionally, structural component of specialized membrane microdomains known as tetraspanin-enriched microdomains (TERMs), which act as platforms for receptor clustering and signaling. Plays a role in various cellular and molecular mechanism through its association with both integrin and non-integrin proteins. These interactions facilitate critical cellular functions, including cell-to-cell communication, wound healing, platelet aggregation, trafficking, cell motility, and angiogenesis. Via interaction with JAM-A/F11R and integrin ITGA3:ITGB1, promotes the recruitment of signaling molecules such as RAC1, CDC42 and RhoGTPases to facilitate the polarization of epithelial cells and the reorganization of the actin cytoskeleton, which are critical steps in cell migration process. Regulates the glycosylation pattern of ITGA3:ITGB1 thereby modulating its activity. Plays an essential role in the maintenance of central laminin-binding integrin ITGA6:ITGB4-containing adhesion complexes. Essential for the proper assembly of the glomerular and tubular basement membranes in kidney. Contributes to T-cell activation by modulating integrin signaling leading to activation of downstream targets PTK2 and MAPK1/MAPK3. (Microbial infection) Plays a role in human papillomavirus 16/HPV-16 endocytosis upon binding to cell surface receptor. Its function is as follows. (Microbial infection) Plays a role in human cytomegalovirus entry into host cell by contributing to entry receptor binding, membrane fusion, or release of the capsid. In Homo sapiens (Human), this protein is CD151 antigen (CD151).